The following is a 92-amino-acid chain: Large ribosomal subunit protein eL43 (92 aa).

A C4-type zinc finger spans residues Cys-39 to Cys-60.

Belongs to the eukaryotic ribosomal protein eL43 family.

This chain is Large ribosomal subunit protein eL43 (RpL37A), found in Drosophila melanogaster (Fruit fly).